Consider the following 440-residue polypeptide: Glutamyl-tRNA reductase (440 aa).

Residues 40 to 43 (TCNR), Ser100, 105 to 107 (ERE), and Gln111 each bind substrate. The Nucleophile role is filled by Cys41. 181–186 (GTGAYA) lines the NADP(+) pocket.

The protein belongs to the glutamyl-tRNA reductase family. Homodimer.

The catalysed reaction is (S)-4-amino-5-oxopentanoate + tRNA(Glu) + NADP(+) = L-glutamyl-tRNA(Glu) + NADPH + H(+). It functions in the pathway porphyrin-containing compound metabolism; protoporphyrin-IX biosynthesis; 5-aminolevulinate from L-glutamyl-tRNA(Glu): step 1/2. In terms of biological role, catalyzes the NADPH-dependent reduction of glutamyl-tRNA(Glu) to glutamate 1-semialdehyde (GSA). The chain is Glutamyl-tRNA reductase from Renibacterium salmoninarum (strain ATCC 33209 / DSM 20767 / JCM 11484 / NBRC 15589 / NCIMB 2235).